Here is a 942-residue protein sequence, read N- to C-terminus: VPS35 endosomal protein sorting factor-like (942 aa).

Belongs to the VPS35L family. Component of the heterotrimeric retriever complex.

The protein localises to the endosome. Acts as a component of the retriever complex. The retriever complex is a heterotrimeric complex related to retromer cargo-selective complex (CSC) and essential for retromer-independent retrieval and recycling of numerous cargos. In Drosophila melanogaster (Fruit fly), this protein is VPS35 endosomal protein sorting factor-like.